Consider the following 174-residue polypeptide: Glycine-rich protein 5 (174 aa).

The N-terminal stretch at 1–22 (MASKSLFLVALLVGSFAFTSFA) is a signal peptide.

As to expression, mostly expressed in immature seed pods, and, to a lower extent, in stems and leaves. Present in phloem and epiderm in leaves, stems, flowers and fruits.

The protein localises to the vacuole. In terms of biological role, involved in organ growth by promoting cell elongation processes. This Arabidopsis thaliana (Mouse-ear cress) protein is Glycine-rich protein 5.